Reading from the N-terminus, the 65-residue chain is MFTTKKSLLLLFFLGTINLSLCQEERNAEEERRDGDDEGGVEVQKRFFPFLLGALGSLLPKIFGK.

An N-terminal signal peptide occupies residues 1–22 (MFTTKKSLLLLFFLGTINLSLC). Residues 23–44 (QEERNAEEERRDGDDEGGVEVQ) constitute a propeptide, removed in mature form. Position 65 is a lysine amide (lysine 65).

Belongs to the frog skin active peptide (FSAP) family. Temporin subfamily. As to expression, expressed by the skin glands.

The protein resides in the secreted. In terms of biological role, antimicrobial peptide. Active against a variety of Gram-positive bacterial strains. Not active against Gram-negative bacteria and against fungi. Shows hemolytic activity against human erythrocytes. This chain is Temporin-SN1, found in Sylvirana spinulosa (Fine-spined frog).